Consider the following 406-residue polypeptide: Tryptophan 2,3-dioxygenase (406 aa).

Residues 72 to 76 (FIVTH) and Arg-144 contribute to the substrate site. His-328 serves as a coordination point for heme. Residue Thr-342 participates in substrate binding.

It belongs to the tryptophan 2,3-dioxygenase family. Homotetramer. Dimer of dimers. Heme serves as cofactor.

The enzyme catalyses L-tryptophan + O2 = N-formyl-L-kynurenine. It functions in the pathway amino-acid degradation; L-tryptophan degradation via kynurenine pathway; L-kynurenine from L-tryptophan: step 1/2. Functionally, heme-dependent dioxygenase that catalyzes the oxidative cleavage of the L-tryptophan (L-Trp) pyrrole ring and converts L-tryptophan to N-formyl-L-kynurenine. Catalyzes the oxidative cleavage of the indole moiety. This chain is Tryptophan 2,3-dioxygenase, found in Xenopus laevis (African clawed frog).